The following is a 343-amino-acid chain: GTPase Obg (343 aa).

An Obg domain is found at 1–159 (MKFLDEAKVY…HWLWLRLKLI (159 aa)). Positions 160-327 (ADAGLVGLPN…ALRALLAAMD (168 aa)) constitute an OBG-type G domain. GTP is bound by residues 166 to 173 (GLPNAGKS), 191 to 195 (FTTLH), 212 to 215 (DIPG), 279 to 282 (SKAD), and 308 to 310 (SAA). Mg(2+) contacts are provided by S173 and T193.

Belongs to the TRAFAC class OBG-HflX-like GTPase superfamily. OBG GTPase family. Monomer. Requires Mg(2+) as cofactor.

The protein resides in the cytoplasm. Its function is as follows. An essential GTPase which binds GTP, GDP and possibly (p)ppGpp with moderate affinity, with high nucleotide exchange rates and a fairly low GTP hydrolysis rate. Plays a role in control of the cell cycle, stress response, ribosome biogenesis and in those bacteria that undergo differentiation, in morphogenesis control. The chain is GTPase Obg from Methylobacterium sp. (strain 4-46).